The following is a 479-amino-acid chain: Ubiquinone biosynthesis monooxygenase COQ6, mitochondrial (479 aa).

It belongs to the UbiH/COQ6 family. In terms of assembly, component of a multi-subunit COQ enzyme complex, composed of at least COQ3, COQ4, COQ5, COQ6, COQ7 and COQ9. It depends on FAD as a cofactor.

Its subcellular location is the mitochondrion inner membrane. The enzyme catalyses 4-hydroxy-3-(all-trans-decaprenyl)benzoate + 2 reduced [2Fe-2S]-[ferredoxin] + O2 + 2 H(+) = 3,4-dihydroxy-5-(all-trans-decaprenyl)benzoate + 2 oxidized [2Fe-2S]-[ferredoxin] + H2O. The catalysed reaction is 2-methoxy-6-(all-trans-decaprenyl)phenol + 2 reduced [2Fe-2S]-[ferredoxin] + O2 + 2 H(+) = 2-methoxy-6-(all-trans-decaprenyl)benzene-1,4-diol + 2 oxidized [2Fe-2S]-[ferredoxin] + H2O. Its pathway is cofactor biosynthesis; ubiquinone biosynthesis. Its function is as follows. FAD-dependent monooxygenase required for two non-consecutive steps during ubiquinone biosynthesis. Required for the C5-ring hydroxylation during ubiquinone biosynthesis by catalyzing the hydroxylation of 4-hydroxy-3-(all-trans-decaprenyl)benzoic acid to 3,4-dihydroxy-5-(all-trans-decaprenyl)benzoic acid. Also acts downstream of COQ4, for the C1-hydroxylation during ubiquinone biosynthesis by catalyzing the hydroxylation of 2-methoxy-6-(all-trans-decaprenyl)phenol to 2-methoxy-6-(all-trans-decaprenyl)benzene-1,4-diol. The electrons required for the hydroxylation reaction are funneled indirectly to coq6 from NADPH via a ferredoxin/ferredoxin reductase system. The sequence is that of Ubiquinone biosynthesis monooxygenase COQ6, mitochondrial from Schizosaccharomyces pombe (strain 972 / ATCC 24843) (Fission yeast).